Here is a 487-residue protein sequence, read N- to C-terminus: MSDVYADWESVIGLEVHVELNTKSKLFSCARNRFGDEPNTNISPVCTGMPGSLPVLNKEAVRKAVLFGCAVEGEVALLSRFDRKSYFYPDSPRNFQITQFEHPIVRGGHIKAIVHGEERHFELAQAHIEDDAGMLKHFGEFAGVDYNRAGVPLIEIVSKPCMFCADDAVAYATALVSLLDYIGISDCNMEEGSVRFDVNISVRPKGSEELRNKVEIKNMNSFAFMAQALEAERCRQIDAYLDNPNADPKTVIPGATYRWDPEKKKTVLMRLKERAEDYKYFIEPDLPVLQLTEAYIDEIRHTLPELPFNKYQRYLHEYALAEDIAAILISDKHSAHFFELAAQECKNYRALSNWLTVEFAGRCKLKGKNLAFSGILPSSVAQLVNFIDQGVITGKIAKDIADMMMESPEKSPETILKENPEMLPMTDESALVAIISEVITANPQSVVDYKSGKTKALGFLVGQIMKRTQGKAPPNRVNELLLVELSK.

It belongs to the GatB/GatE family. GatB subfamily. Heterotrimer of A, B and C subunits.

It carries out the reaction L-glutamyl-tRNA(Gln) + L-glutamine + ATP + H2O = L-glutaminyl-tRNA(Gln) + L-glutamate + ADP + phosphate + H(+). The catalysed reaction is L-aspartyl-tRNA(Asn) + L-glutamine + ATP + H2O = L-asparaginyl-tRNA(Asn) + L-glutamate + ADP + phosphate + 2 H(+). Functionally, allows the formation of correctly charged Asn-tRNA(Asn) or Gln-tRNA(Gln) through the transamidation of misacylated Asp-tRNA(Asn) or Glu-tRNA(Gln) in organisms which lack either or both of asparaginyl-tRNA or glutaminyl-tRNA synthetases. The reaction takes place in the presence of glutamine and ATP through an activated phospho-Asp-tRNA(Asn) or phospho-Glu-tRNA(Gln). The polypeptide is Aspartyl/glutamyl-tRNA(Asn/Gln) amidotransferase subunit B (Chlamydia abortus (strain DSM 27085 / S26/3) (Chlamydophila abortus)).